The sequence spans 378 residues: Erythronate-4-phosphate dehydrogenase (378 aa).

Residues Ser45 and Thr66 each coordinate substrate. Residues Asp146 and Thr175 each coordinate NAD(+). Residue Arg208 is part of the active site. Asp232 provides a ligand contact to NAD(+). Residue Glu237 is part of the active site. His254 (proton donor) is an active-site residue. Gly257 contacts NAD(+). Tyr258 is a substrate binding site.

It belongs to the D-isomer specific 2-hydroxyacid dehydrogenase family. PdxB subfamily. Homodimer.

Its subcellular location is the cytoplasm. It catalyses the reaction 4-phospho-D-erythronate + NAD(+) = (R)-3-hydroxy-2-oxo-4-phosphooxybutanoate + NADH + H(+). It participates in cofactor biosynthesis; pyridoxine 5'-phosphate biosynthesis; pyridoxine 5'-phosphate from D-erythrose 4-phosphate: step 2/5. Catalyzes the oxidation of erythronate-4-phosphate to 3-hydroxy-2-oxo-4-phosphonooxybutanoate. This chain is Erythronate-4-phosphate dehydrogenase, found in Escherichia coli (strain K12 / MC4100 / BW2952).